A 905-amino-acid chain; its full sequence is Chitin synthase 3B (905 aa).

The span at Met-1–Tyr-10 shows a compositional bias: basic and acidic residues. The tract at residues Met-1–Lys-136 is disordered. Residues Gly-81 to Gly-93 show a composition bias toward gly residues. Asn-536 carries an N-linked (GlcNAc...) asparagine glycan. Residues Met-562 to Gly-584 form a helical membrane-spanning segment. Residue Asn-601 is glycosylated (N-linked (GlcNAc...) asparagine). 6 helical membrane-spanning segments follow: residues Ile-618–Ala-638, Ser-653–Val-673, Val-705–Leu-725, Ser-733–Phe-753, Thr-832–Thr-852, and Phe-873–Leu-893.

The protein belongs to the chitin synthase family. Class III subfamily.

It is found in the cell membrane. The enzyme catalyses [(1-&gt;4)-N-acetyl-beta-D-glucosaminyl](n) + UDP-N-acetyl-alpha-D-glucosamine = [(1-&gt;4)-N-acetyl-beta-D-glucosaminyl](n+1) + UDP + H(+). In terms of biological role, polymerizes chitin, a structural polymer of the cell wall and septum, by transferring the sugar moiety of UDP-GlcNAc to the non-reducing end of the growing chitin polymer. Plays essential functions in fungal survival and host infection. This is Chitin synthase 3B from Gibberella zeae (strain ATCC MYA-4620 / CBS 123657 / FGSC 9075 / NRRL 31084 / PH-1) (Wheat head blight fungus).